The following is a 127-amino-acid chain: Aspartate 1-decarboxylase (127 aa).

The active-site Schiff-base intermediate with substrate; via pyruvic acid is Ser25. At Ser25 the chain carries Pyruvic acid (Ser). Thr57 contacts substrate. The Proton donor role is filled by Tyr58. Substrate is bound at residue 73 to 75 (GAA).

This sequence belongs to the PanD family. In terms of assembly, heterooctamer of four alpha and four beta subunits. It depends on pyruvate as a cofactor. In terms of processing, is synthesized initially as an inactive proenzyme, which is activated by self-cleavage at a specific serine bond to produce a beta-subunit with a hydroxyl group at its C-terminus and an alpha-subunit with a pyruvoyl group at its N-terminus.

The protein resides in the cytoplasm. It carries out the reaction L-aspartate + H(+) = beta-alanine + CO2. It functions in the pathway cofactor biosynthesis; (R)-pantothenate biosynthesis; beta-alanine from L-aspartate: step 1/1. In terms of biological role, catalyzes the pyruvoyl-dependent decarboxylation of aspartate to produce beta-alanine. The sequence is that of Aspartate 1-decarboxylase from Bacillus cereus (strain ATCC 10987 / NRS 248).